A 172-amino-acid polypeptide reads, in one-letter code: L-methionine sulfoximine/L-methionine sulfone acetyltransferase (172 aa).

An N-acetyltransferase domain is found at 3–166 (ASIRDAGVAD…DLTFMQLNLD (164 aa)). Residues 75 to 77 (RPF) and 85 to 87 (EHS) each bind substrate. Residues 88–90 (VYV), 96–101 (GKGLGV), and Asn127 each bind acetyl-CoA.

Homodimer.

The catalysed reaction is L-methionine sulfoximine + acetyl-CoA = N-acetyl-L-methionine sulfoximine + CoA + H(+). It catalyses the reaction L-methionine sulfone + acetyl-CoA = N-acetyl-L-methionine sulfone + CoA + H(+). Plays a role in the resistance against the toxic effects of L-methionine sulfoximine (MSX), a rare amino acid, which inhibits glutamine synthetase (GlnA). Catalyzes the acetylation of L-methionine sulfoximine (MSX). It can also use L-methionine sulfone (MSO). The polypeptide is L-methionine sulfoximine/L-methionine sulfone acetyltransferase (Pseudomonas paraeruginosa (strain DSM 24068 / PA7) (Pseudomonas aeruginosa (strain PA7))).